Here is a 128-residue protein sequence, read N- to C-terminus: Holo-[acyl-carrier-protein] synthase (128 aa).

Asp8 and Glu58 together coordinate Mg(2+).

Belongs to the P-Pant transferase superfamily. AcpS family. Mg(2+) serves as cofactor.

The protein resides in the cytoplasm. The catalysed reaction is apo-[ACP] + CoA = holo-[ACP] + adenosine 3',5'-bisphosphate + H(+). Transfers the 4'-phosphopantetheine moiety from coenzyme A to a Ser of acyl-carrier-protein. This chain is Holo-[acyl-carrier-protein] synthase, found in Exiguobacterium sibiricum (strain DSM 17290 / CCUG 55495 / CIP 109462 / JCM 13490 / 255-15).